Consider the following 78-residue polypeptide: Conotoxin Cl14.9 (78 aa).

Residues 1–22 (MTAKATLLVLALVVMATSGVSS) form the signal peptide. The propeptide occupies 23-47 (ASVAGGPVVNSDTVSRSDPERLSTR). I70 carries the isoleucine amide modification. Residues 74–78 (DITQQ) constitute a propeptide that is removed on maturation.

Contains 2 disulfide bonds. Expressed by the venom duct.

The protein localises to the secreted. The protein is Conotoxin Cl14.9 of Californiconus californicus (California cone).